The following is a 238-amino-acid chain: ATP-dependent dethiobiotin synthetase BioD (238 aa).

12–17 (EVGKTV) serves as a coordination point for ATP. Position 16 (threonine 16) interacts with Mg(2+). Lysine 37 is an active-site residue. Substrate is bound at residue threonine 41. Residues aspartate 50, 109–112 (EGAG), 170–171 (GS), and 200–202 (PAG) contribute to the ATP site. Residues aspartate 50 and glutamate 109 each coordinate Mg(2+).

Belongs to the dethiobiotin synthetase family. As to quaternary structure, homodimer. Requires Mg(2+) as cofactor.

The protein resides in the cytoplasm. It carries out the reaction (7R,8S)-7,8-diammoniononanoate + CO2 + ATP = (4R,5S)-dethiobiotin + ADP + phosphate + 3 H(+). Its pathway is cofactor biosynthesis; biotin biosynthesis; biotin from 7,8-diaminononanoate: step 1/2. Catalyzes a mechanistically unusual reaction, the ATP-dependent insertion of CO2 between the N7 and N8 nitrogen atoms of 7,8-diaminopelargonic acid (DAPA, also called 7,8-diammoniononanoate) to form a ureido ring. In Parafrankia sp. (strain EAN1pec), this protein is ATP-dependent dethiobiotin synthetase BioD.